A 32-amino-acid polypeptide reads, in one-letter code: Cytochrome b6-f complex subunit 7 (32 aa).

The chain crosses the membrane as a helical span at residues 5-25 (IFGTAAIFWVLIPIGLVGGAL).

This sequence belongs to the PetM family. In terms of assembly, the 4 large subunits of the cytochrome b6-f complex are cytochrome b6, subunit IV (17 kDa polypeptide, PetD), cytochrome f and the Rieske protein, while the 4 small subunits are PetG, PetL, PetM and PetN. The complex functions as a dimer.

The protein resides in the cellular thylakoid membrane. Component of the cytochrome b6-f complex, which mediates electron transfer between photosystem II (PSII) and photosystem I (PSI), cyclic electron flow around PSI, and state transitions. In Synechococcus sp. (strain CC9902), this protein is Cytochrome b6-f complex subunit 7.